Consider the following 156-residue polypeptide: 6,7-dimethyl-8-ribityllumazine synthase (156 aa).

5-amino-6-(D-ribitylamino)uracil-binding positions include phenylalanine 24, 56–58 (SFE), and 80–82 (AVV). 85–86 (ET) provides a ligand contact to (2S)-2-hydroxy-3-oxobutyl phosphate. Catalysis depends on histidine 88, which acts as the Proton donor. Phenylalanine 113 is a 5-amino-6-(D-ribitylamino)uracil binding site. Residue arginine 127 participates in (2S)-2-hydroxy-3-oxobutyl phosphate binding.

Belongs to the DMRL synthase family.

The enzyme catalyses (2S)-2-hydroxy-3-oxobutyl phosphate + 5-amino-6-(D-ribitylamino)uracil = 6,7-dimethyl-8-(1-D-ribityl)lumazine + phosphate + 2 H2O + H(+). The protein operates within cofactor biosynthesis; riboflavin biosynthesis; riboflavin from 2-hydroxy-3-oxobutyl phosphate and 5-amino-6-(D-ribitylamino)uracil: step 1/2. Catalyzes the formation of 6,7-dimethyl-8-ribityllumazine by condensation of 5-amino-6-(D-ribitylamino)uracil with 3,4-dihydroxy-2-butanone 4-phosphate. This is the penultimate step in the biosynthesis of riboflavin. The protein is 6,7-dimethyl-8-ribityllumazine synthase of Thermococcus kodakarensis (strain ATCC BAA-918 / JCM 12380 / KOD1) (Pyrococcus kodakaraensis (strain KOD1)).